A 201-amino-acid chain; its full sequence is Protease (201 aa).

Catalysis depends on residues His55, Asp72, and Cys122.

This sequence belongs to the peptidase C5 family. Interacts with protease cofactor pVI-C; this interaction is necessary for protease activation.

The protein resides in the virion. It localises to the host nucleus. It carries out the reaction Cleaves proteins of the adenovirus and its host cell at two consensus sites: -Yaa-Xaa-Gly-Gly-|-Xaa- and -Yaa-Xaa-Gly-Xaa-|-Gly- (in which Yaa is Met, Ile or Leu, and Xaa is any amino acid).. Requires DNA and protease cofactor for maximal activation. Inside nascent virions, becomes partially activated by binding to the viral DNA, allowing it to cleave the cofactor that binds to the protease and fully activates it. Actin, like the viral protease cofactor, seems to act as a cofactor in the cleavage of cytokeratin 18 and of actin itself. Its function is as follows. Cleaves viral precursor proteins (pTP, pIIIa, pVI, pVII, pVIII, and pX) inside newly assembled particles giving rise to mature virions. Protease complexed to its cofactor slides along the viral DNA to specifically locate and cleave the viral precursors. Mature virions have a weakened organization compared to the unmature virions, thereby facilitating subsequent uncoating. Without maturation, the particle lacks infectivity and is unable to uncoat. Late in adenovirus infection, in the cytoplasm, may participate in the cytoskeleton destruction. Cleaves host cell cytoskeletal keratins K7 and K18. This Bovine adenovirus 4 (BAdV-4) protein is Protease.